The chain runs to 154 residues: Deoxyuridine 5'-triphosphate nucleotidohydrolase (154 aa).

Substrate is bound by residues 64-66 (RSG), Asn-77, 81-83 (TVD), and Lys-91.

This sequence belongs to the dUTPase family. In terms of assembly, homotrimer. Mg(2+) is required as a cofactor.

The catalysed reaction is dUTP + H2O = dUMP + diphosphate + H(+). It participates in pyrimidine metabolism; dUMP biosynthesis; dUMP from dCTP (dUTP route): step 2/2. This enzyme is involved in nucleotide metabolism: it produces dUMP, the immediate precursor of thymidine nucleotides and it decreases the intracellular concentration of dUTP so that uracil cannot be incorporated into DNA. This Mycolicibacterium gilvum (strain PYR-GCK) (Mycobacterium gilvum (strain PYR-GCK)) protein is Deoxyuridine 5'-triphosphate nucleotidohydrolase.